The chain runs to 208 residues: Phosphoribosyl-dephospho-CoA transferase (208 aa).

Catalysis depends on residues Asp-133 and Asp-135.

This sequence belongs to the MdcG family.

The enzyme catalyses apo-[malonate decarboxylase ACP] + 2'-(5''-triphospho-alpha-D-ribosyl)-3'-dephospho-CoA = holo-[malonate decarboxylase ACP] + diphosphate. Transfers 2'-(5-triphosphoribosyl)-3'-dephosphocoenzyme-A to the apo-[acyl-carrier-protein] of the malonate decarboxylase to yield holo-[acyl-carrier-protein]. The chain is Phosphoribosyl-dephospho-CoA transferase from Pseudomonas fluorescens (strain ATCC BAA-477 / NRRL B-23932 / Pf-5).